A 193-amino-acid polypeptide reads, in one-letter code: NADH-quinone oxidoreductase subunit B (193 aa).

Cys72, Cys73, Cys137, and Cys167 together coordinate [4Fe-4S] cluster.

The protein belongs to the complex I 20 kDa subunit family. NDH-1 is composed of 14 different subunits. Subunits NuoB, C, D, E, F, and G constitute the peripheral sector of the complex. The cofactor is [4Fe-4S] cluster.

Its subcellular location is the cell inner membrane. It carries out the reaction a quinone + NADH + 5 H(+)(in) = a quinol + NAD(+) + 4 H(+)(out). In terms of biological role, NDH-1 shuttles electrons from NADH, via FMN and iron-sulfur (Fe-S) centers, to quinones in the respiratory chain. The immediate electron acceptor for the enzyme in this species is believed to be ubiquinone. Couples the redox reaction to proton translocation (for every two electrons transferred, four hydrogen ions are translocated across the cytoplasmic membrane), and thus conserves the redox energy in a proton gradient. The sequence is that of NADH-quinone oxidoreductase subunit B from Bartonella henselae (strain ATCC 49882 / DSM 28221 / CCUG 30454 / Houston 1) (Rochalimaea henselae).